The chain runs to 547 residues: Probable ABC transporter periplasmic-binding protein SapA (547 aa).

Positions 1–21 are cleaved as a signal peptide; it reads MRQVLSSLLVIAGLVSGQAIA.

The protein belongs to the bacterial solute-binding protein 5 family.

The protein resides in the periplasm. Functionally, not part of a putrescine export system. Very similar to a S.typhimurium protein implicated in antimicrobial peptide resistance, but the SapBCDF operon in E.coli is implicated in putrescine export. This chain is Probable ABC transporter periplasmic-binding protein SapA (sapA), found in Escherichia coli (strain K12).